Here is a 134-residue protein sequence, read N- to C-terminus: Beta-synuclein (134 aa).

Repeat copies occupy residues E20–A30 and E31–G41. The 4 X 11 AA tandem repeats of [EGS]-K-T-K-[EQ]-[GQ]-V-X(4) stretch occupies residues E20–G67. One copy of the 3; approximate repeat lies at S42 to A56. Repeat unit 4 spans residues E57–G67. A disordered region spans residues F89–A134. The segment covering V98 to A134 has biased composition (acidic residues). S118 is subject to Phosphoserine; by BARK1, CK2 and GRK5.

The protein belongs to the synuclein family. Phosphorylated. Phosphorylation by G-protein coupled receptor kinases (GRK) is more efficient than phosphorylation by CK1, CK2 and CaM-kinase II. Expressed predominantly in brain; concentrated in presynaptic nerve terminals.

The protein resides in the cytoplasm. Non-amyloid component of senile plaques found in Alzheimer disease. Could act as a regulator of SNCA aggregation process. Protects neurons from staurosporine and 6-hydroxy dopamine (6OHDA)-stimulated caspase activation in a p53/TP53-dependent manner. Contributes to restore the SNCA anti-apoptotic function abolished by 6OHDA. Not found in the Lewy bodies associated with Parkinson disease. This Homo sapiens (Human) protein is Beta-synuclein (SNCB).